A 159-amino-acid polypeptide reads, in one-letter code: Protein-export protein SecB (159 aa).

This sequence belongs to the SecB family. As to quaternary structure, homotetramer, a dimer of dimers. One homotetramer interacts with 1 SecA dimer.

The protein resides in the cytoplasm. In terms of biological role, one of the proteins required for the normal export of preproteins out of the cell cytoplasm. It is a molecular chaperone that binds to a subset of precursor proteins, maintaining them in a translocation-competent state. It also specifically binds to its receptor SecA. This is Protein-export protein SecB from Shewanella amazonensis (strain ATCC BAA-1098 / SB2B).